The sequence spans 312 residues: Carbamate kinase 2 (312 aa).

Belongs to the carbamate kinase family.

The protein resides in the cytoplasm. It catalyses the reaction hydrogencarbonate + NH4(+) + ATP = carbamoyl phosphate + ADP + H2O + H(+). The protein operates within metabolic intermediate metabolism; carbamoyl phosphate degradation; CO(2) and NH(3) from carbamoyl phosphate: step 1/1. The sequence is that of Carbamate kinase 2 (arcC2) from Enterococcus faecalis (strain ATCC 700802 / V583).